Reading from the N-terminus, the 683-residue chain is WD repeat-containing protein 48 homolog (683 aa).

WD repeat units follow at residues 27–82 (SNRS…PVQY), 88–130 (QHTD…FIDC), 133–167 (THKD…INAN), 176–215 (GCKD…KIMK), 218–257 (GHTD…CIAT), 260–299 (AHEE…KSQL), and 302–343 (KEEA…QLSI). Positions 341–364 (LSIGGDEDGPSTSNANHSVSASSS) are disordered. A compositionally biased stretch (low complexity) spans 351 to 364 (STSNANHSVSASSS). One copy of the WD 8 repeat lies at 389–428 (PGAPAIKKHAMLSDKRHVLTRDSDGNVALYDVLAARKIKD).

Belongs to the WD repeat WDR48 family. Interacts with usp-46; the interaction increases the catalytic activity of usp-46 in the presence of wdr-20. As to expression, expressed in several head neurons and cells in the tail including the anal depressor cell.

In terms of biological role, together with wdr-20, binds to and stimulates the activity of the deubiquitinating enzyme usp-46, leading to deubiquitination and stabilization of the glr-1 glutamate receptor. This is WD repeat-containing protein 48 homolog (wdr-48) from Caenorhabditis elegans.